The chain runs to 648 residues: ATPase family AAA domain-containing protein 3B (648 aa).

2 disordered regions span residues 1-54 (MSWL…DPTG) and 111-134 (QAEERRKTLSEETRQHQARAQYQD). An N-acetylserine modification is found at Ser2. Residues 2–246 (SWLFGVNKGP…FRAFVTDRDK (245 aa)) lie on the Mitochondrial intermembrane side of the membrane. A compositionally biased stretch (pro residues) spans 17 to 26 (GPPPPLPPAQ). Composition is skewed to basic and acidic residues over residues 32–48 (GGDRGLGDRPAPKDKWS) and 111–125 (QAEERRKTLSEETRQ). A coiled-coil region spans residues 69-214 (RYAKEALNLA…DIIREQIRLK (146 aa)). The segment at residues 247–264 (VTATVAGLTLLAVGVYSA) is an intramembrane region (helical). The Mitochondrial intermembrane portion of the chain corresponds to 265 to 648 (KNATAVTGRF…PFCPPGHPLL (384 aa)). Residue 352–359 (GPPGTGKT) participates in ATP binding. An N6-acetyllysine mark is found at Lys427 and Lys495.

It belongs to the AAA ATPase family. As to quaternary structure, forms heterooligomers with ATAD3A. Interacts with components of the mitochondrial ribosome, including MRPL11 and MRPS18B, and with other proteins involved in mitochondrial RNA metabolism, possibly via interaction with ATAD3A. Interacts with GADD45GIP1. As to expression, tends to be down-regulated in differentiated cells and re-expressed in pluripotent stem cells or cancer cells (at protein level).

Its subcellular location is the mitochondrion inner membrane. In terms of biological role, may play a role in a mitochondrial network organization typical for stem cells, characterized by reduced mitochondrial metabolism, low mtDNA copies and fragmentated mitochondrial network. May act by suppressing ATAD3A function, interfering with ATAD3A interaction with matrix nucleoid complexes. The protein is ATPase family AAA domain-containing protein 3B (ATAD3B) of Homo sapiens (Human).